The chain runs to 393 residues: Phosphoglycerate kinase (393 aa).

Substrate is bound by residues 21 to 23 (DFN), 59 to 62 (HLGR), arginine 118, and arginine 151. ATP is bound by residues lysine 201, glutamate 323, and 349–352 (GGDT).

This sequence belongs to the phosphoglycerate kinase family. As to quaternary structure, monomer.

It localises to the cytoplasm. The enzyme catalyses (2R)-3-phosphoglycerate + ATP = (2R)-3-phospho-glyceroyl phosphate + ADP. It participates in carbohydrate degradation; glycolysis; pyruvate from D-glyceraldehyde 3-phosphate: step 2/5. The chain is Phosphoglycerate kinase from Pelotomaculum thermopropionicum (strain DSM 13744 / JCM 10971 / SI).